The chain runs to 505 residues: Oxidative stress-induced growth inhibitor 2 (505 aa).

Belongs to the OKL38 family. NADPH is required as a cofactor. Ubiquitous. Expressed at higher levels in testis and ovary.

The protein localises to the midbody. Monooxygenase catalytic activity. May be involved in meiosis or the maturation of germ cells. This Homo sapiens (Human) protein is Oxidative stress-induced growth inhibitor 2.